Consider the following 149-residue polypeptide: Large ribosomal subunit protein bL9 (149 aa).

This sequence belongs to the bacterial ribosomal protein bL9 family.

Functionally, binds to the 23S rRNA. The chain is Large ribosomal subunit protein bL9 from Acidothermus cellulolyticus (strain ATCC 43068 / DSM 8971 / 11B).